A 426-amino-acid polypeptide reads, in one-letter code: Serine--tRNA ligase (426 aa).

L-serine is bound at residue 233–235 (TAE). 264 to 266 (RRE) provides a ligand contact to ATP. An L-serine-binding site is contributed by E287. ATP is bound at residue 351 to 354 (EISS). S386 serves as a coordination point for L-serine.

It belongs to the class-II aminoacyl-tRNA synthetase family. Type-1 seryl-tRNA synthetase subfamily. As to quaternary structure, homodimer. The tRNA molecule binds across the dimer.

Its subcellular location is the cytoplasm. It catalyses the reaction tRNA(Ser) + L-serine + ATP = L-seryl-tRNA(Ser) + AMP + diphosphate + H(+). It carries out the reaction tRNA(Sec) + L-serine + ATP = L-seryl-tRNA(Sec) + AMP + diphosphate + H(+). It participates in aminoacyl-tRNA biosynthesis; selenocysteinyl-tRNA(Sec) biosynthesis; L-seryl-tRNA(Sec) from L-serine and tRNA(Sec): step 1/1. Functionally, catalyzes the attachment of serine to tRNA(Ser). Is also able to aminoacylate tRNA(Sec) with serine, to form the misacylated tRNA L-seryl-tRNA(Sec), which will be further converted into selenocysteinyl-tRNA(Sec). This chain is Serine--tRNA ligase, found in Prochlorococcus marinus (strain NATL1A).